Consider the following 469-residue polypeptide: Cytochrome P450 85A1 (469 aa).

The helical transmembrane segment at 1–21 threads the bilayer; it reads MVLVAIGVVVAAAVVVSSLLL. Position 419 (C419) interacts with heme.

It belongs to the cytochrome P450 family. Heme serves as cofactor. In terms of tissue distribution, expressed at low levels in all the tissues, but preferentially in the leaf sheath.

The protein localises to the membrane. The enzyme catalyses 6-deoxoteasterone + reduced [NADPH--hemoprotein reductase] + O2 = 6alpha-hydroxyteasterone + oxidized [NADPH--hemoprotein reductase] + H2O + H(+). It carries out the reaction 6alpha-hydroxytyphasterol + reduced [NADPH--hemoprotein reductase] + O2 = teasterone + oxidized [NADPH--hemoprotein reductase] + 2 H2O + H(+). The catalysed reaction is 3-dehydro-6-deoxoteasterone + reduced [NADPH--hemoprotein reductase] + O2 = 3-dehydro-6alpha-hydroxyteasterone + oxidized [NADPH--hemoprotein reductase] + H2O + H(+). It catalyses the reaction 3-dehydro-6alpha-hydroxyteasterone + reduced [NADPH--hemoprotein reductase] + O2 = 3-dehydroteasterone + oxidized [NADPH--hemoprotein reductase] + 2 H2O + H(+). The enzyme catalyses 6-deoxotyphasterol + reduced [NADPH--hemoprotein reductase] + O2 = 6alpha-hydroxytyphasterol + oxidized [NADPH--hemoprotein reductase] + H2O + H(+). It carries out the reaction 6alpha-hydroxytyphasterol + reduced [NADPH--hemoprotein reductase] + O2 = typhasterol + oxidized [NADPH--hemoprotein reductase] + 2 H2O + H(+). The catalysed reaction is 3-dehydro-6-deoxoteasterone + 2 reduced [NADPH--hemoprotein reductase] + 2 O2 = 3-dehydroteasterone + 2 oxidized [NADPH--hemoprotein reductase] + 3 H2O + 2 H(+). It catalyses the reaction 6-deoxoteasterone + 2 reduced [NADPH--hemoprotein reductase] + 2 O2 = teasterone + 2 oxidized [NADPH--hemoprotein reductase] + 3 H2O + 2 H(+). The enzyme catalyses 6-deoxotyphasterol + 2 reduced [NADPH--hemoprotein reductase] + 2 O2 = typhasterol + 2 oxidized [NADPH--hemoprotein reductase] + 3 H2O + 2 H(+). The protein operates within plant hormone biosynthesis; brassinosteroid biosynthesis. Its function is as follows. Catalyzes the C6-oxidation step in brassinosteroids biosynthesis. May convert 6-deoxoteasterone (6-deoxoTE) to teasterone (TE), 3-dehydro-6-deoxoteasterone (6-deoxo3DT, 6-deoxo3DHT) to 3-dehydroteasterone (3DT, 3-DHT), and 6-deoxotyphasterol (6-deoxoTY) to typhasterol (TY). Involved in the organization and elongation of the leaf and stem cells. Not able to convert 6-deoxocastasterone (6-deoxoCS) and castasterone (CS) to brassinolide (BL). The chain is Cytochrome P450 85A1 from Oryza sativa subsp. japonica (Rice).